Here is a 476-residue protein sequence, read N- to C-terminus: MSYSQTRTQSKAGYDAGVKDYKLTYYTPDYTPKDTDILAAFRMTPQPGVPPEEAGAAVAAESSTGTWTTVWTDLLTDLDRYKGRCYDIEAVANEDNQYIAYIAYPLDLFEEGSVVNLLTSLVGNVFGFKALRALRLEDIRIPVAYMKTFQGPPHGITVERDKINKYGRPLLGCTIKPKLGLSAKNYGRAVYECLRGGLDFTKDDENINSQPFMRWRDRFLFVAEAIHKAQAETGEIKGHYLNVTAATCEEMLKRAEFAKELEMPIIMHDFITGGFTANTTLSHWCRDNGVLLHIHRAMHAVIDRQKNHGMHFRVLSKCLRMSGGDHIHTGTVVGKLEGEKGITMGFVDLLRENYVEKDLSRGIYFTQDWASMGGVMAVASGGIHVWHMPALVEIFGDDSVLQFGGGTLGHPWGCAPGATANRVALEACVQARNEGRDMAREGGDILREAAKWSPELAVALEVWKEIKFEFEAMDTV.

Residues Asn-124 and Thr-174 each contribute to the substrate site. The active-site Proton acceptor is the Lys-176. Lys-178 is a substrate binding site. Lys-202, Asp-204, and Glu-205 together coordinate Mg(2+). Lys-202 bears the N6-carboxylysine mark. Residue His-295 is the Proton acceptor of the active site. Arg-296, His-328, and Ser-380 together coordinate substrate.

It belongs to the RuBisCO large chain family. Type I subfamily. As to quaternary structure, heterohexadecamer of 8 large chains and 8 small chains; disulfide-linked. The disulfide link is formed within the large subunit homodimers. Mg(2+) is required as a cofactor. The disulfide bond which can form in the large chain dimeric partners within the hexadecamer appears to be associated with oxidative stress and protein turnover.

It is found in the carboxysome. It carries out the reaction 2 (2R)-3-phosphoglycerate + 2 H(+) = D-ribulose 1,5-bisphosphate + CO2 + H2O. The catalysed reaction is D-ribulose 1,5-bisphosphate + O2 = 2-phosphoglycolate + (2R)-3-phosphoglycerate + 2 H(+). Its function is as follows. RuBisCO catalyzes two reactions: the carboxylation of D-ribulose 1,5-bisphosphate, the primary event in carbon dioxide fixation, as well as the oxidative fragmentation of the pentose substrate in the photorespiration process. Both reactions occur simultaneously and in competition at the same active site. The protein is Ribulose bisphosphate carboxylase large chain of Acaryochloris marina (strain MBIC 11017).